Reading from the N-terminus, the 471-residue chain is uncharacterized protein (471 aa).

12 consecutive transmembrane segments (helical) span residues 48–68 (FISA…FTIV), 85–105 (LSGV…YPML), 123–140 (YTMS…YALA), 145–165 (SVAL…MFLY), 186–206 (VVNS…GGLM), 223–243 (SGNW…FACF), 277–297 (FVGC…YFLL), 320–340 (GNFL…FSYL), 349–369 (IILL…TIHY), 379–399 (FIIY…SVSL), 414–434 (VAVQ…GGAF), and 440–460 (VVFF…LLII).

The protein belongs to the major facilitator superfamily.

The protein resides in the golgi apparatus. It is found in the membrane. This is an uncharacterized protein from Schizosaccharomyces pombe (strain 972 / ATCC 24843) (Fission yeast).